A 397-amino-acid chain; its full sequence is tRNA-specific 2-thiouridylase MnmA (397 aa).

ATP-binding positions include 6-13 and Leu-32; that span reads AMSGGVDS. Residue Cys-101 is the Nucleophile of the active site. The cysteines at positions 101 and 199 are disulfide-linked. Gly-125 serves as a coordination point for ATP. Residues 148 to 150 are interaction with tRNA; the sequence is KDQ. The Cysteine persulfide intermediate role is filled by Cys-199.

This sequence belongs to the MnmA/TRMU family.

Its subcellular location is the cytoplasm. The enzyme catalyses S-sulfanyl-L-cysteinyl-[protein] + uridine(34) in tRNA + AH2 + ATP = 2-thiouridine(34) in tRNA + L-cysteinyl-[protein] + A + AMP + diphosphate + H(+). In terms of biological role, catalyzes the 2-thiolation of uridine at the wobble position (U34) of tRNA, leading to the formation of s(2)U34. The protein is tRNA-specific 2-thiouridylase MnmA of Clavibacter sepedonicus (Clavibacter michiganensis subsp. sepedonicus).